The primary structure comprises 457 residues: Cell division protein FtsA (457 aa).

The protein belongs to the FtsA/MreB family. As to quaternary structure, self-interacts. Interacts with FtsZ.

It is found in the cell membrane. Functionally, cell division protein that is involved in the assembly of the Z ring. May serve as a membrane anchor for the Z ring. Increased expression restores growth to a PBP2b (penA) deletion strain as well as mreCD and rodA deletions, but not gpsB or rodZ deletions. Does not restore wild-type cell morphology to the penA deletion. In Streptococcus pneumoniae serotype 2 (strain D39 / NCTC 7466), this protein is Cell division protein FtsA.